The following is a 100-amino-acid chain: Aspartyl/glutamyl-tRNA(Asn/Gln) amidotransferase subunit C (100 aa).

This sequence belongs to the GatC family. In terms of assembly, heterotrimer of A, B and C subunits.

The catalysed reaction is L-glutamyl-tRNA(Gln) + L-glutamine + ATP + H2O = L-glutaminyl-tRNA(Gln) + L-glutamate + ADP + phosphate + H(+). It catalyses the reaction L-aspartyl-tRNA(Asn) + L-glutamine + ATP + H2O = L-asparaginyl-tRNA(Asn) + L-glutamate + ADP + phosphate + 2 H(+). In terms of biological role, allows the formation of correctly charged Asn-tRNA(Asn) or Gln-tRNA(Gln) through the transamidation of misacylated Asp-tRNA(Asn) or Glu-tRNA(Gln) in organisms which lack either or both of asparaginyl-tRNA or glutaminyl-tRNA synthetases. The reaction takes place in the presence of glutamine and ATP through an activated phospho-Asp-tRNA(Asn) or phospho-Glu-tRNA(Gln). The chain is Aspartyl/glutamyl-tRNA(Asn/Gln) amidotransferase subunit C from Staphylococcus epidermidis (strain ATCC 35984 / DSM 28319 / BCRC 17069 / CCUG 31568 / BM 3577 / RP62A).